We begin with the raw amino-acid sequence, 307 residues long: Ornithine carbamoyltransferase (307 aa).

Residues 50-53, Q77, R101, and 128-131 each bind carbamoyl phosphate; these read STRT and HPCQ. Residues N160, D224, and 228–229 each bind L-ornithine; that span reads SM. Residues 264-265 and R292 contribute to the carbamoyl phosphate site; that span reads CL.

Belongs to the aspartate/ornithine carbamoyltransferase superfamily. OTCase family.

The protein resides in the cytoplasm. The enzyme catalyses carbamoyl phosphate + L-ornithine = L-citrulline + phosphate + H(+). Its pathway is amino-acid biosynthesis; L-arginine biosynthesis; L-arginine from L-ornithine and carbamoyl phosphate: step 1/3. With respect to regulation, inhibited by arginine, norvaline. Reversibly catalyzes the transfer of the carbamoyl group from carbamoyl phosphate (CP) to the N(epsilon) atom of ornithine (ORN) to produce L-citrulline, which is a substrate for argininosuccinate synthetase, the enzyme involved in the final step in arginine biosynthesis. This Mycolicibacterium smegmatis (strain ATCC 700084 / mc(2)155) (Mycobacterium smegmatis) protein is Ornithine carbamoyltransferase.